Here is a 609-residue protein sequence, read N- to C-terminus: Threonine--tRNA ligase (609 aa).

The segment at 1–143 (MRVLYIHAER…SFKPEGAKVE (143 aa)) is editing domain. Catalytic regions lie at residues 195-491 (PRYL…PRLP) and 196-491 (RYLD…PRLP). Positions 288, 339, and 460 each coordinate Zn(2+).

The protein belongs to the class-II aminoacyl-tRNA synthetase family. Homodimer. Zn(2+) serves as cofactor.

It localises to the cytoplasm. The catalysed reaction is tRNA(Thr) + L-threonine + ATP = L-threonyl-tRNA(Thr) + AMP + diphosphate + H(+). Functionally, catalyzes the attachment of threonine to tRNA(Thr) in a two-step reaction: L-threonine is first activated by ATP to form Thr-AMP and then transferred to the acceptor end of tRNA(Thr). Also edits incorrectly charged L-seryl-tRNA(Thr). The protein is Threonine--tRNA ligase of Pyrobaculum islandicum (strain DSM 4184 / JCM 9189 / GEO3).